A 467-amino-acid chain; its full sequence is 3-isopropylmalate dehydratase large subunit (467 aa).

3 residues coordinate [4Fe-4S] cluster: C347, C407, and C410.

This sequence belongs to the aconitase/IPM isomerase family. LeuC type 1 subfamily. Heterodimer of LeuC and LeuD. The cofactor is [4Fe-4S] cluster.

It catalyses the reaction (2R,3S)-3-isopropylmalate = (2S)-2-isopropylmalate. Its pathway is amino-acid biosynthesis; L-leucine biosynthesis; L-leucine from 3-methyl-2-oxobutanoate: step 2/4. In terms of biological role, catalyzes the isomerization between 2-isopropylmalate and 3-isopropylmalate, via the formation of 2-isopropylmaleate. The protein is 3-isopropylmalate dehydratase large subunit of Pelagibacter ubique (strain HTCC1062).